The sequence spans 147 residues: Hemoglobin subunit beta (147 aa).

N-acetylvaline is present on Val-2. The 145-residue stretch at 3-147 (HLTGEEKAAV…VANALAHKYH (145 aa)) folds into the Globin domain. The residue at position 13 (Thr-13) is a Phosphothreonine. Ser-45 is subject to Phosphoserine. Lys-60 is subject to N6-acetyllysine. Residue His-64 participates in heme b binding. An N6-acetyllysine modification is found at Lys-83. Position 93 (His-93) interacts with heme b. Cys-94 carries the S-nitrosocysteine modification. An N6-acetyllysine modification is found at Lys-145.

It belongs to the globin family. In terms of assembly, heterotetramer of two alpha chains and two beta chains. In terms of tissue distribution, red blood cells.

Functionally, involved in oxygen transport from the lung to the various peripheral tissues. This Cheracebus torquatus (Collared titi monkey) protein is Hemoglobin subunit beta (HBB).